Reading from the N-terminus, the 166-residue chain is MSERNTLFSRPLPIALFILVALVADQAIKYLVEAFLPFQEAVPVVPMLALYRTYNYGVAFSMLSGMEGWFIVGMRLAVVAFVLWLWRRTPKDRFFAHLGYAMIIAGALGNLVDRLLFGYVIDYILFHTATWSFAVFNLADSFITVGAGAIILDELLQTKKTRSLKL.

3 helical membrane passes run 12–32 (LPIA…KYLV), 66–86 (MEGW…LWLW), and 101–121 (AMII…GYVI). Residues D122 and D140 contribute to the active site. A helical transmembrane segment spans residues 132-152 (SFAVFNLADSFITVGAGAIIL).

The protein belongs to the peptidase A8 family.

The protein localises to the cell inner membrane. The enzyme catalyses Release of signal peptides from bacterial membrane prolipoproteins. Hydrolyzes -Xaa-Yaa-Zaa-|-(S,diacylglyceryl)Cys-, in which Xaa is hydrophobic (preferably Leu), and Yaa (Ala or Ser) and Zaa (Gly or Ala) have small, neutral side chains.. Its pathway is protein modification; lipoprotein biosynthesis (signal peptide cleavage). Its function is as follows. This protein specifically catalyzes the removal of signal peptides from prolipoproteins. The polypeptide is Lipoprotein signal peptidase (Sinorhizobium fredii (strain NBRC 101917 / NGR234)).